Reading from the N-terminus, the 240-residue chain is UDP-2,3-diacylglucosamine hydrolase (240 aa).

5 residues coordinate Mn(2+): Asp-8, His-10, Asp-41, Asn-79, and His-114. 79–80 contributes to the substrate binding site; that stretch reads NR. 5 residues coordinate substrate: Asp-122, Ser-160, Asn-164, Lys-167, and His-195. Positions 195 and 197 each coordinate Mn(2+).

This sequence belongs to the LpxH family. Mn(2+) is required as a cofactor.

It is found in the cell inner membrane. The catalysed reaction is UDP-2-N,3-O-bis[(3R)-3-hydroxytetradecanoyl]-alpha-D-glucosamine + H2O = 2-N,3-O-bis[(3R)-3-hydroxytetradecanoyl]-alpha-D-glucosaminyl 1-phosphate + UMP + 2 H(+). Its pathway is glycolipid biosynthesis; lipid IV(A) biosynthesis; lipid IV(A) from (3R)-3-hydroxytetradecanoyl-[acyl-carrier-protein] and UDP-N-acetyl-alpha-D-glucosamine: step 4/6. Hydrolyzes the pyrophosphate bond of UDP-2,3-diacylglucosamine to yield 2,3-diacylglucosamine 1-phosphate (lipid X) and UMP by catalyzing the attack of water at the alpha-P atom. Involved in the biosynthesis of lipid A, a phosphorylated glycolipid that anchors the lipopolysaccharide to the outer membrane of the cell. This Salmonella arizonae (strain ATCC BAA-731 / CDC346-86 / RSK2980) protein is UDP-2,3-diacylglucosamine hydrolase.